We begin with the raw amino-acid sequence, 121 residues long: Auxin-responsive protein SAUR32 (121 aa).

This sequence belongs to the ARG7 family. In terms of tissue distribution, expressed in roots, leaves and stems.

Its subcellular location is the nucleus. It localises to the cytoplasm. Functionally, may play a role in the apical hook development. This chain is Auxin-responsive protein SAUR32, found in Arabidopsis thaliana (Mouse-ear cress).